A 1229-amino-acid chain; its full sequence is Pesticidal crystal protein Cry1Bb (1229 aa).

It belongs to the delta endotoxin family.

Its function is as follows. Promotes colloidosmotic lysis by binding to the midgut epithelial cells of many lepidopteran larvae. The chain is Pesticidal crystal protein Cry1Bb (cry1Bb) from Bacillus thuringiensis.